Consider the following 192-residue polypeptide: Pyridoxal 5'-phosphate synthase subunit PdxT (192 aa).

Position 50–52 (50–52 (GES)) interacts with L-glutamine. The active-site Nucleophile is the cysteine 82. Residues arginine 109 and 136–137 (IR) each bind L-glutamine. Catalysis depends on charge relay system residues histidine 172 and glutamate 174.

Belongs to the glutaminase PdxT/SNO family. In terms of assembly, in the presence of PdxS, forms a dodecamer of heterodimers. Only shows activity in the heterodimer.

The enzyme catalyses aldehydo-D-ribose 5-phosphate + D-glyceraldehyde 3-phosphate + L-glutamine = pyridoxal 5'-phosphate + L-glutamate + phosphate + 3 H2O + H(+). It carries out the reaction L-glutamine + H2O = L-glutamate + NH4(+). It functions in the pathway cofactor biosynthesis; pyridoxal 5'-phosphate biosynthesis. In terms of biological role, catalyzes the hydrolysis of glutamine to glutamate and ammonia as part of the biosynthesis of pyridoxal 5'-phosphate. The resulting ammonia molecule is channeled to the active site of PdxS. The sequence is that of Pyridoxal 5'-phosphate synthase subunit PdxT from Haemophilus influenzae (strain PittEE).